Here is a 192-residue protein sequence, read N- to C-terminus: MSGDLDRQYKLVVVGGGGVGKSALTIQFIQSHFVQDYDPTIEDSYRKQCVIDDKVAHLDILDTAGQEEFSAMRDEYMRTGEGFLLVFSVTDRSSFDEIPRFHTQILRVKDIEEFPMILVGNKSDLENERTVSTAEAQELGRKLKVSYLESSAKQRINVDAAFHDLVRAIRNANKASVEPLRKKEKSRRCIVL.

15–22 (GGGGVGKS) lines the GTP pocket. The Effector region motif lies at 37 to 45 (YDPTIEDSY). GTP-binding positions include 62 to 66 (DTAGQ) and 121 to 124 (NKSD). The residue at position 189 (Cys189) is a Cysteine methyl ester. Cys189 carries the S-geranylgeranyl cysteine lipid modification. Residues 190–192 (IVL) constitute a propeptide, removed in mature form.

The protein belongs to the small GTPase superfamily. Ras family.

Its subcellular location is the cell membrane. It catalyses the reaction GTP + H2O = GDP + phosphate + H(+). Its activity is regulated as follows. Alternates between an inactive form bound to GDP and an active form bound to GTP. Activated by a guanine nucleotide-exchange factor (GEF) and inactivated by a GTPase-activating protein (GAP). In terms of biological role, ras proteins bind GDP/GTP and possess intrinsic GTPase activity. In Hydra vulgaris (Hydra), this protein is Ras-like protein RAS2 (RAS2).